The sequence spans 638 residues: MTSTIDSDGAAESRVFEADVAKLLQMMVHSVYSDKDVFLRELISNAADACERLRYDAISDPALLADDARPQIAITIDAERRQLTVDDNGIGMSRDEMVDALGTIARSGTKAFIEQAKVEQAKSAEAGDGVTVIGQFGVGFYSAFMVADQVDVISRRAGAGEAWRWSSDGKGTFTVTPADESEAPARGTRVMLHLTEDAKGYTDRLKLEQIVREQSGHVPVPIVLVEQPGAAPTEIADGAALWTKPRGEIGTSEYVDFYRSVAGHFDEPALTVHFRAEGRQEFTALLFVPQTRSFDLFETDRKGPIKLYVKRVFITDDADLLPRYLRFVRGVVDSADLPLNISREMIQESPILAAIKKSITGRVLSELEKLAEKDAQAYGKVWEAFGPMFKEGIYDAADRRDAILSLCRFRTTAGSLRSLKDYVGALKDNQTSIYYLAGQDAARLEASPHLEGFRARGVEVLLLSDPVDSFWVTSAPSFEGKPFKSVTQGDTDLAAIPRVDASAETLQEVSASVTEFLAFLKTTLADLVSDVRSSERLTDSPVCLIAAESGPDRQLEKILVGVGQLTGASKPVLEVNPRHPLIASLAALGDGDRAFKEDTARMLLDDARVLDGDRPSDALEFSRRLARIVERGLRGSTA.

Residues 1–343 (MTSTIDSDGA…SADLPLNISR (343 aa)) are a; substrate-binding. Residues 344-557 (EMIQESPILA…ESGPDRQLEK (214 aa)) form a b region. A c region spans residues 558 to 638 (ILVGVGQLTG…VERGLRGSTA (81 aa)).

Belongs to the heat shock protein 90 family. In terms of assembly, homodimer.

It is found in the cytoplasm. Molecular chaperone. Has ATPase activity. In Nitrobacter hamburgensis (strain DSM 10229 / NCIMB 13809 / X14), this protein is Chaperone protein HtpG.